The following is a 1081-amino-acid chain: SPX and EXS domain-containing protein 4 (1081 aa).

In terms of domain architecture, SPX spans 1–483 (MKFRDLLNDH…RIISSECRKY (483 aa)). 3 disordered regions span residues 86-118 (ETADSPAIPSPIISHSNINSNNNNNGGTNSVGF), 160-271 (QRNN…HDKN), and 318-354 (VKGDKSNDKNNDKSNDKNNNKNNKNNNNNNNLNDEDN). Composition is skewed to low complexity over residues 90–110 (SPAIPSPIISHSNINSNNNNN), 161–196 (RNNNNNINNINNNNNNNSNNSNNSNNNKTIKNTRNI), and 211–228 (SPFSSPSIGSPPMSSPSP). The segment covering 244-264 (KDEDEEEEGEEEEDIEMEQLE) has biased composition (acidic residues). The span at 319–336 (KGDKSNDKNNDKSNDKNN) shows a compositional bias: basic and acidic residues. Low complexity predominate over residues 337–349 (NKNNKNNNNNNNL). The next 9 helical transmembrane spans lie at 536–556 (NLFTIGLLIGVCIVLGIQVVF), 573–593 (LAWLLFRISLLPILLGTMFSL), 622–642 (YLKYGLIFNTLWLLALNLYID), 654–674 (ILIPIVFVLITLIIGIQPFPI), 703–723 (FFMSVQLLSLGEFLFNIQSMV), 776–796 (ITSAIRSIFSIIALVLNYIAL), 803–823 (WSIIKIAWFGINVVGSFYKFY), 854–874 (WIYYVAITLDFFLRFTWLIIF), and 887–907 (PLFLFFFSLTEVVWATQFIFF). The EXS domain occupies 738–940 (FCSQSRFFAL…SQEYNNYMDE (203 aa)). Positions 939–1031 (DEKKKRRKRK…INDHMNPDTG (93 aa)) are disordered. Positions 942–951 (KKRRKRKQKQ) are enriched in basic residues. Low complexity predominate over residues 952-970 (SKSNNNNNNNNNNNNNNNN). Positions 977 to 1003 (SSNNVETDETITSSNNTDSSHQKQPLT) are enriched in polar residues. A compositionally biased stretch (basic and acidic residues) spans 1013–1022 (NHQDHHDLSI).

This sequence belongs to the SYG1 (TC 2.A.94) family.

The protein resides in the membrane. The polypeptide is SPX and EXS domain-containing protein 4 (Dictyostelium discoideum (Social amoeba)).